The chain runs to 308 residues: Staphylococcal superantigen-like 4 (308 aa).

Positions 1 to 30 are cleaved as a signal peptide; the sequence is MKITTIAKTSLALGLLTTGVITTTTQAANA. The tract at residues 28 to 117 is disordered; sequence ANATTPSSTK…TTKQVPTEIN (90 aa). Polar residues-rich tracts occupy residues 33–47 and 55–76; these read PSSTKVEAPQSTPPS and SKPNATTPPSTKVEAPQQTANA. Positions 77-93 are enriched in low complexity; sequence TTPPSTKVTTPPSTNTP. The segment covering 94–114 has biased composition (polar residues); the sequence is QPMQSTKSDTPQSPTTKQVPT. A sialyl Lewis X-binding region spans residues 180–278; the sequence is VDVFVVLEEN…VIKMKNGGKY (99 aa).

Belongs to the staphylococcal/streptococcal toxin family.

The protein localises to the secreted. Its function is as follows. Secreted protein that plays a role in immune innate response inhibition by interfering with host TLR2-mediated pathway. The sequence is that of Staphylococcal superantigen-like 4 from Staphylococcus aureus (strain Newman).